A 304-amino-acid chain; its full sequence is Acetylglutamate kinase (304 aa).

Substrate is bound by residues 82–83 (GG), Arg104, and Asn197.

Belongs to the acetylglutamate kinase family. ArgB subfamily.

The protein resides in the cytoplasm. It carries out the reaction N-acetyl-L-glutamate + ATP = N-acetyl-L-glutamyl 5-phosphate + ADP. It functions in the pathway amino-acid biosynthesis; L-arginine biosynthesis; N(2)-acetyl-L-ornithine from L-glutamate: step 2/4. Catalyzes the ATP-dependent phosphorylation of N-acetyl-L-glutamate. The sequence is that of Acetylglutamate kinase from Prochlorococcus marinus (strain NATL2A).